The sequence spans 214 residues: Protein-L-isoaspartate O-methyltransferase 1 (214 aa).

Serine 62 is an active-site residue.

Belongs to the methyltransferase superfamily. L-isoaspartyl/D-aspartyl protein methyltransferase family.

The protein localises to the cytoplasm. The enzyme catalyses [protein]-L-isoaspartate + S-adenosyl-L-methionine = [protein]-L-isoaspartate alpha-methyl ester + S-adenosyl-L-homocysteine. Its function is as follows. Catalyzes the methyl esterification of L-isoaspartyl residues in peptides and proteins that result from spontaneous decomposition of normal L-aspartyl and L-asparaginyl residues. It plays a role in the repair and/or degradation of damaged proteins. The chain is Protein-L-isoaspartate O-methyltransferase 1 from Syntrophobacter fumaroxidans (strain DSM 10017 / MPOB).